The chain runs to 843 residues: Probable disease resistance protein At5g47250 (843 aa).

Residues 28–58 (MLKENLVLLKSAFDELKAEKEDVVNRVNAGE) are a coiled coil. In terms of domain architecture, NB-ARC spans 141–440 (TEQPPPPVVE…GEGFIDEKDG (300 aa)). 183–190 (GMGGVGKT) contacts ATP. LRR repeat units lie at residues 510–531 (TVTK…PEFP), 535–556 (NLVT…FFLV), 559–581 (TLVV…ISAL), 583–604 (SLRL…LGVL), and 606–628 (KLIH…SELQ).

The protein belongs to the disease resistance NB-LRR family.

Functionally, probable disease resistance protein. The polypeptide is Probable disease resistance protein At5g47250 (Arabidopsis thaliana (Mouse-ear cress)).